A 339-amino-acid polypeptide reads, in one-letter code: Ketol-acid reductoisomerase (NADP(+)) (339 aa).

In terms of domain architecture, KARI N-terminal Rossmann spans 1–182 (MRVYYDRDAD…GGGRSGIIET (182 aa)). Residues 24–27 (YGSQ), Arg-48, Ser-51, Thr-53, and 83–86 (DEHQ) contribute to the NADP(+) site. Residue His-108 is part of the active site. Gly-134 is an NADP(+) binding site. Positions 183-328 (NFREECETDL…ARLRGMMPWI (146 aa)) constitute a KARI C-terminal knotted domain. Mg(2+) contacts are provided by Asp-191, Glu-195, Glu-227, and Glu-231. A substrate-binding site is contributed by Ser-252.

Belongs to the ketol-acid reductoisomerase family. The cofactor is Mg(2+).

The catalysed reaction is (2R)-2,3-dihydroxy-3-methylbutanoate + NADP(+) = (2S)-2-acetolactate + NADPH + H(+). It carries out the reaction (2R,3R)-2,3-dihydroxy-3-methylpentanoate + NADP(+) = (S)-2-ethyl-2-hydroxy-3-oxobutanoate + NADPH + H(+). It functions in the pathway amino-acid biosynthesis; L-isoleucine biosynthesis; L-isoleucine from 2-oxobutanoate: step 2/4. Its pathway is amino-acid biosynthesis; L-valine biosynthesis; L-valine from pyruvate: step 2/4. Its function is as follows. Involved in the biosynthesis of branched-chain amino acids (BCAA). Catalyzes an alkyl-migration followed by a ketol-acid reduction of (S)-2-acetolactate (S2AL) to yield (R)-2,3-dihydroxy-isovalerate. In the isomerase reaction, S2AL is rearranged via a Mg-dependent methyl migration to produce 3-hydroxy-3-methyl-2-ketobutyrate (HMKB). In the reductase reaction, this 2-ketoacid undergoes a metal-dependent reduction by NADPH to yield (R)-2,3-dihydroxy-isovalerate. This is Ketol-acid reductoisomerase (NADP(+)) from Caulobacter vibrioides (strain ATCC 19089 / CIP 103742 / CB 15) (Caulobacter crescentus).